A 404-amino-acid chain; its full sequence is MKPPFQQALGIIRQLNRHGYEAYFVGGAVRDLLLGRPIGDVDIATSALPDEVMAIFPKTIDVGSKHGTVVVVHEGTAYEVTTFRTDGDYEDHRRPESVTFVRSLEEDLKRRDFTMNAIAMDEHGTIIDPFGGQEAIEKRLIRTVGEADARFREDALRMMRAVRFVSQLGFSLAIDTKKAIIANAPLLAHISVERMTMEMEKLLAGPFAAEALPLLAETGLSTYLPGLAEKGEWLRRAAAYRWPWLAAREERWALLCHALGVKESRPFLRAWKLPNKVIDEAGAILATLAAVPEPAAWTNEQLFLAGLKRALSVEVVRAALTGKPYEPQHDELRRRFAALPIKTKGELAVNGKVVIDWIGKPAGPWVKETLDAIWRAVVNGEVENEKERIYAWLMERSRTQEKNC.

Residues Gly-27 and Arg-30 each contribute to the ATP site. Residues Gly-27 and Arg-30 each contribute to the CTP site. Mg(2+) is bound by residues Asp-40 and Asp-42. The ATP site is built by Arg-111, Asp-154, Arg-157, Arg-160, and Arg-163. CTP-binding residues include Arg-111, Asp-154, Arg-157, Arg-160, and Arg-163.

This sequence belongs to the tRNA nucleotidyltransferase/poly(A) polymerase family. Bacterial CCA-adding enzyme type 3 subfamily. As to quaternary structure, homodimer. The cofactor is Mg(2+).

The catalysed reaction is a tRNA precursor + 2 CTP + ATP = a tRNA with a 3' CCA end + 3 diphosphate. It carries out the reaction a tRNA with a 3' CCA end + 2 CTP + ATP = a tRNA with a 3' CCACCA end + 3 diphosphate. Its function is as follows. Catalyzes the addition and repair of the essential 3'-terminal CCA sequence in tRNAs without using a nucleic acid template. Adds these three nucleotides in the order of C, C, and A to the tRNA nucleotide-73, using CTP and ATP as substrates and producing inorganic pyrophosphate. tRNA 3'-terminal CCA addition is required both for tRNA processing and repair. Also involved in tRNA surveillance by mediating tandem CCA addition to generate a CCACCA at the 3' terminus of unstable tRNAs. While stable tRNAs receive only 3'-terminal CCA, unstable tRNAs are marked with CCACCA and rapidly degraded. This chain is CCA-adding enzyme, found in Geobacillus thermodenitrificans (strain NG80-2).